Consider the following 359-residue polypeptide: Phosphoserine aminotransferase (359 aa).

Residue R41 coordinates L-glutamate. Pyridoxal 5'-phosphate contacts are provided by residues A75–S76, W101, T152, D171, and Q194. K195 is subject to N6-(pyridoxal phosphate)lysine. N236–T237 provides a ligand contact to pyridoxal 5'-phosphate.

Belongs to the class-V pyridoxal-phosphate-dependent aminotransferase family. SerC subfamily. As to quaternary structure, homodimer. The cofactor is pyridoxal 5'-phosphate.

The protein localises to the cytoplasm. It carries out the reaction O-phospho-L-serine + 2-oxoglutarate = 3-phosphooxypyruvate + L-glutamate. The catalysed reaction is 4-(phosphooxy)-L-threonine + 2-oxoglutarate = (R)-3-hydroxy-2-oxo-4-phosphooxybutanoate + L-glutamate. It functions in the pathway amino-acid biosynthesis; L-serine biosynthesis; L-serine from 3-phospho-D-glycerate: step 2/3. It participates in cofactor biosynthesis; pyridoxine 5'-phosphate biosynthesis; pyridoxine 5'-phosphate from D-erythrose 4-phosphate: step 3/5. Functionally, catalyzes the reversible conversion of 3-phosphohydroxypyruvate to phosphoserine and of 3-hydroxy-2-oxo-4-phosphonooxybutanoate to phosphohydroxythreonine. This Acinetobacter baylyi (strain ATCC 33305 / BD413 / ADP1) protein is Phosphoserine aminotransferase.